The chain runs to 319 residues: Homeobox protein Hox-B5a (319 aa).

The segment at 114 to 224 is disordered; that stretch reads SLLSPGSGDT…NTVGSEGQPP (111 aa). Residues 128 to 155 show a composition bias toward low complexity; sequence RSSSPRSEQSGSGNLSSTNLSSSTNISS. Positions 226 to 231 match the Antp-type hexapeptide motif; the sequence is IFPWMR. The homeobox DNA-binding region spans 244–303; it reads GKRARTAYTRYQTLELEKEFHFNRYLTRRRRIEIAHALCLTERQIKIWFQNRRMKWKKDN.

This sequence belongs to the Antp homeobox family.

It localises to the nucleus. Sequence-specific transcription factor which is part of a developmental regulatory system that provides cells with specific positional identities on the anterior-posterior axis. This chain is Homeobox protein Hox-B5a (hoxb5a), found in Takifugu rubripes (Japanese pufferfish).